The following is a 95-amino-acid chain: Sec-independent protein translocase protein TatA (95 aa).

The helical transmembrane segment at 1–21 (MGGISIWQLLIIALIVVLLFG) threads the bilayer. Residues 50-61 (KALEDNAADKPA) show a composition bias toward basic and acidic residues. The tract at residues 50–95 (KALEDNAADKPAADAAKVTETAKVAETAPVAETAEKKAESKGKEQA) is disordered. A compositionally biased stretch (low complexity) spans 62-81 (ADAAKVTETAKVAETAPVAE). Positions 82-95 (TAEKKAESKGKEQA) are enriched in basic and acidic residues.

It belongs to the TatA/E family. In terms of assembly, the Tat system comprises two distinct complexes: a TatABC complex, containing multiple copies of TatA, TatB and TatC subunits, and a separate TatA complex, containing only TatA subunits. Substrates initially bind to the TatABC complex, which probably triggers association of the separate TatA complex to form the active translocon.

It localises to the cell inner membrane. Part of the twin-arginine translocation (Tat) system that transports large folded proteins containing a characteristic twin-arginine motif in their signal peptide across membranes. TatA could form the protein-conducting channel of the Tat system. The protein is Sec-independent protein translocase protein TatA of Shewanella halifaxensis (strain HAW-EB4).